Here is a 256-residue protein sequence, read N- to C-terminus: Proteasome subunit beta type-5 (256 aa).

Residues 1 to 55 (CNMALADIVRLPPASEAPFAPLGAPRDLSGPPSKLAVRPWGGADLPGPGLQLLHG) constitute a propeptide, removed in mature form. Thr-56 acts as the Nucleophile in catalysis.

This sequence belongs to the peptidase T1B family. The 26S proteasome consists of a 20S proteasome core and two 19S regulatory subunits. The 20S proteasome core is a barrel-shaped complex made of 28 subunits that are arranged in four stacked rings. The two outer rings are each formed by seven alpha subunits, and the two inner rings are formed by seven beta subunits. The proteolytic activity is exerted by three beta-subunits PSMB5, PSMB6 and PSMB7. Directly interacts with POMP. Interacts with ABCB1 and TAP1.

It is found in the cytoplasm. It localises to the nucleus. The catalysed reaction is Cleavage of peptide bonds with very broad specificity.. Functionally, component of the 20S core proteasome complex involved in the proteolytic degradation of most intracellular proteins. This complex plays numerous essential roles within the cell by associating with different regulatory particles. Associated with two 19S regulatory particles, forms the 26S proteasome and thus participates in the ATP-dependent degradation of ubiquitinated proteins. The 26S proteasome plays a key role in the maintenance of protein homeostasis by removing misfolded or damaged proteins that could impair cellular functions, and by removing proteins whose functions are no longer required. Associated with the PA200 or PA28, the 20S proteasome mediates ubiquitin-independent protein degradation. This type of proteolysis is required in several pathways including spermatogenesis (20S-PA200 complex) or generation of a subset of MHC class I-presented antigenic peptides (20S-PA28 complex). Within the 20S core complex, PSMB5 displays a chymotrypsin-like activity. The chain is Proteasome subunit beta type-5 (PSMB5) from Gallus gallus (Chicken).